Consider the following 447-residue polypeptide: Phosphatidylinositol 4-kinase type 2-alpha (447 aa).

The tract at residues Met1–Glu77 is disordered. Residues Arg48–Glu77 are compositionally biased toward basic and acidic residues. Positions Gly92–Thr421 constitute a PI3K/PI4K catalytic domain. The segment at Ile98–Gly104 is G-loop. Residues Tyr99–Ser105 and Lys120 contribute to the ATP site. The segment at Glu125–Tyr127 is important for substrate binding. The tract at residues Lys133–Cys146 is important for interaction with membranes. S-palmitoyl cysteine attachment occurs at residues Cys142, Cys143, Cys145, and Cys146. Gln229–Val232 contributes to the ATP binding site. The segment at Lys236 to Arg244 is important for interaction with membranes. The tract at residues Arg273 to Asn281 is catalytic loop. The tract at residues Ala312 to Phe332 is activation loop. Asp314 lines the ATP pocket. Residues Trp327 to Trp336 form an important for interaction with membranes region.

The protein belongs to the PI3/PI4-kinase family. Type II PI4K subfamily.

The protein localises to the golgi apparatus. Its subcellular location is the trans-Golgi network membrane. It is found in the membrane raft. The protein resides in the endosome. It localises to the cytoplasmic vesicle. The protein localises to the cell projection. Its subcellular location is the dendrite. It is found in the presynaptic cell membrane. The protein resides in the synapse. It localises to the synaptosome. The protein localises to the mitochondrion. Its subcellular location is the membrane. It is found in the cell membrane. The protein resides in the perikaryon. It localises to the neuron projection. It catalyses the reaction a 1,2-diacyl-sn-glycero-3-phospho-(1D-myo-inositol) + ATP = a 1,2-diacyl-sn-glycero-3-phospho-(1D-myo-inositol 4-phosphate) + ADP + H(+). Membrane-bound phosphatidylinositol-4 kinase (PI4-kinase) that catalyzes the phosphorylation of phosphatidylinositol (PI) to phosphatidylinositol 4-phosphate (PI4P), a lipid that plays important roles in endocytosis, Golgi function, protein sorting and membrane trafficking. Besides, phosphorylation of phosphatidylinositol (PI) to phosphatidylinositol 4-phosphate (PI4P) is the first committed step in the generation of phosphatidylinositol 4,5-bisphosphate (PIP2), a precursor of the second messenger inositol 1,4,5-trisphosphate (InsP3). This chain is Phosphatidylinositol 4-kinase type 2-alpha (pi4k2a), found in Danio rerio (Zebrafish).